Reading from the N-terminus, the 62-residue chain is Large ribosomal subunit protein bL28 (62 aa).

It belongs to the bacterial ribosomal protein bL28 family.

The polypeptide is Large ribosomal subunit protein bL28 (Ruminiclostridium cellulolyticum (strain ATCC 35319 / DSM 5812 / JCM 6584 / H10) (Clostridium cellulolyticum)).